The primary structure comprises 102 residues: Putative pterin-4-alpha-carbinolamine dehydratase (102 aa).

It belongs to the pterin-4-alpha-carbinolamine dehydratase family.

It carries out the reaction (4aS,6R)-4a-hydroxy-L-erythro-5,6,7,8-tetrahydrobiopterin = (6R)-L-erythro-6,7-dihydrobiopterin + H2O. The polypeptide is Putative pterin-4-alpha-carbinolamine dehydratase (Burkholderia lata (strain ATCC 17760 / DSM 23089 / LMG 22485 / NCIMB 9086 / R18194 / 383)).